Reading from the N-terminus, the 517-residue chain is Cytochrome P450 monooxygenase TRI4 (517 aa).

Residues Ala-15–Leu-37 traverse the membrane as a helical segment. The N-linked (GlcNAc...) asparagine glycan is linked to Asn-444. Residue Cys-452 participates in heme binding.

This sequence belongs to the cytochrome P450 family. The cofactor is heme.

It localises to the membrane. It participates in sesquiterpene biosynthesis; trichothecene biosynthesis. Its function is as follows. Cytochrome P450 monooxygenase; part of the gene cluster that mediates the production of the antimicrobial trichothecene harzianum A (HA) that plays a role in Botrytis cinerea antagonistic activity and plant defense priming. The biosynthesis of harzianum A begins with the cyclization of farnesyl diphosphate to trichodiene and is catalyzed by the trichodiene synthase TRI5. Trichodiene undergoes a series of oxygenations catalyzed by the cytochrome P450 monooxygenase TRI4. TRI4 controls the addition of 3 oxygens at C-2, C-11, and the C-12, C-13-epoxide to form the intermediate isotrichodiol. Isotrichodiol then undergoes a non-enzymatic isomerization and cyclization to form 12,13-epoxytrichothec-9-ene (EPT) which is further converted to trichodermol by the cytochrome P450 monooxygenase TRI11 via C-4 hydroxylation. The last step of HA synthesis is esterification of an octatriendioyl moiety to the C-4 oxygen of trichodermol. The octatriendioyl moiety is probably produced by the polyketide synthase TRI17 and the esterification performed by the trichothecene O-acetyltransferase TRI3. The polypeptide is Cytochrome P450 monooxygenase TRI4 (Trichoderma arundinaceum).